Here is a 253-residue protein sequence, read N- to C-terminus: Tryptophan synthase alpha chain (253 aa).

Residues Glu-45 and Asp-56 each act as proton acceptor in the active site.

It belongs to the TrpA family. As to quaternary structure, tetramer of two alpha and two beta chains.

The enzyme catalyses (1S,2R)-1-C-(indol-3-yl)glycerol 3-phosphate + L-serine = D-glyceraldehyde 3-phosphate + L-tryptophan + H2O. It functions in the pathway amino-acid biosynthesis; L-tryptophan biosynthesis; L-tryptophan from chorismate: step 5/5. Its function is as follows. The alpha subunit is responsible for the aldol cleavage of indoleglycerol phosphate to indole and glyceraldehyde 3-phosphate. The polypeptide is Tryptophan synthase alpha chain (Flavobacterium psychrophilum (strain ATCC 49511 / DSM 21280 / CIP 103535 / JIP02/86)).